Reading from the N-terminus, the 216-residue chain is UPF0711 protein C18orf21 homolog (216 aa).

Disordered regions lie at residues 118–185 and 197–216; these read RSFL…ASKT and SQSESKKNPKMDFRNFLSSL. Positions 124-136 are enriched in polar residues; that stretch reads LKSNPTTPTSKLS. Phosphoserine is present on serine 126. Phosphothreonine occurs at positions 130 and 139. Composition is skewed to polar residues over residues 145–157 and 167–182; these read PSSANLNHTSGSK and TPTSGQSTSICSSKNA. Positions 200–209 are enriched in basic and acidic residues; the sequence is ESKKNPKMDF.

Belongs to the UPF0711 family.

The chain is UPF0711 protein C18orf21 homolog from Bos taurus (Bovine).